We begin with the raw amino-acid sequence, 581 residues long: Arginine--tRNA ligase (581 aa).

A 'HIGH' region motif is present at residues 122–132 (PNVAKPMHVGH).

The protein belongs to the class-I aminoacyl-tRNA synthetase family. In terms of assembly, monomer.

Its subcellular location is the cytoplasm. It catalyses the reaction tRNA(Arg) + L-arginine + ATP = L-arginyl-tRNA(Arg) + AMP + diphosphate. In Francisella tularensis subsp. holarctica (strain FTNF002-00 / FTA), this protein is Arginine--tRNA ligase.